The primary structure comprises 111 residues: UPF0145 protein BTH_I2656 (111 aa).

Belongs to the UPF0145 family.

This chain is UPF0145 protein BTH_I2656, found in Burkholderia thailandensis (strain ATCC 700388 / DSM 13276 / CCUG 48851 / CIP 106301 / E264).